The following is a 218-amino-acid chain: Adenylate kinase (218 aa).

Gly10–Thr15 is a binding site for ATP. An NMP region spans residues Ser30–Val59. Residues Thr31, Arg36, Glu57–Val59, Gly86–Arg89, and Gln93 contribute to the AMP site. Residues Gly127–Asp164 are LID. Residues Arg128 and Val137 to Tyr138 each bind ATP. AMP contacts are provided by Arg161 and Arg172. Residue Gln200 participates in ATP binding.

It belongs to the adenylate kinase family. In terms of assembly, monomer.

It is found in the cytoplasm. The catalysed reaction is AMP + ATP = 2 ADP. The protein operates within purine metabolism; AMP biosynthesis via salvage pathway; AMP from ADP: step 1/1. Its function is as follows. Catalyzes the reversible transfer of the terminal phosphate group between ATP and AMP. Plays an important role in cellular energy homeostasis and in adenine nucleotide metabolism. The polypeptide is Adenylate kinase (Chloroherpeton thalassium (strain ATCC 35110 / GB-78)).